A 37-amino-acid polypeptide reads, in one-letter code: Large ribosomal subunit protein bL36 (37 aa).

This sequence belongs to the bacterial ribosomal protein bL36 family.

This Beutenbergia cavernae (strain ATCC BAA-8 / DSM 12333 / CCUG 43141 / JCM 11478 / NBRC 16432 / NCIMB 13614 / HKI 0122) protein is Large ribosomal subunit protein bL36.